Reading from the N-terminus, the 83-residue chain is MKNVITAPKIGQSVFIPFVTKTDELTGKTERIKGAALIPFDTIDAVYAENERSNNGKTVFSVRVKSGDVVKVVQRNEKWEAVL.

This is an uncharacterized protein from Escherichia phage Bf23 (Enterobacteria phage BF23).